The sequence spans 309 residues: Foldase protein PrsA (309 aa).

Residues 1–22 (MKTRSKLAAGFLTLMSVATLAA) form the signal peptide. The N-palmitoyl cysteine moiety is linked to residue Cys-23. A lipid anchor (S-diacylglycerol cysteine) is attached at Cys-23. The PpiC domain maps to 146-241 (TPETSVQVIK…TSYYIIKVTD (96 aa)).

Belongs to the PrsA family.

Its subcellular location is the cell membrane. The enzyme catalyses [protein]-peptidylproline (omega=180) = [protein]-peptidylproline (omega=0). Functionally, plays a major role in protein secretion by helping the post-translocational extracellular folding of several secreted proteins. The sequence is that of Foldase protein PrsA from Streptococcus agalactiae serotype III (strain NEM316).